We begin with the raw amino-acid sequence, 658 residues long: Threonine--tRNA ligase (658 aa).

Residues 1-61 (MSDVRVTVQR…AAGDVVEPIT (61 aa)) form the TGS domain. The tract at residues 259–554 (DHRRLGAELD…LLEHYAGALP (296 aa)) is catalytic. The Zn(2+) site is built by C353, H404, and H531.

Belongs to the class-II aminoacyl-tRNA synthetase family. In terms of assembly, homodimer. Zn(2+) is required as a cofactor.

The protein resides in the cytoplasm. The catalysed reaction is tRNA(Thr) + L-threonine + ATP = L-threonyl-tRNA(Thr) + AMP + diphosphate + H(+). Catalyzes the attachment of threonine to tRNA(Thr) in a two-step reaction: L-threonine is first activated by ATP to form Thr-AMP and then transferred to the acceptor end of tRNA(Thr). Also edits incorrectly charged L-seryl-tRNA(Thr). This is Threonine--tRNA ligase from Parafrankia sp. (strain EAN1pec).